Here is a 422-residue protein sequence, read N- to C-terminus: Histidine--tRNA ligase (422 aa).

Belongs to the class-II aminoacyl-tRNA synthetase family. In terms of assembly, homodimer.

Its subcellular location is the cytoplasm. It carries out the reaction tRNA(His) + L-histidine + ATP = L-histidyl-tRNA(His) + AMP + diphosphate + H(+). This is Histidine--tRNA ligase from Syntrophomonas wolfei subsp. wolfei (strain DSM 2245B / Goettingen).